A 933-amino-acid polypeptide reads, in one-letter code: Clumping factor A (933 aa).

The first 39 residues, 1–39 (MNMKKKEKHAIRKKSIGVASVLVGTLIGFGLLSSKEADA), serve as a signal peptide directing secretion. Positions 9–20 (HAIRKKSIGVAS) match the YSIRK-G/S signaling motif motif. Disordered regions lie at residues 34–200 (SKEA…SNKD) and 529–904 (FNNG…SEDE). Residues 40 to 542 (SENSVTQSDS…SGSGDGIDKP (503 aa)) are ligand binding A region. The segment covering 47–65 (SDSASNESKSNDSSSVSAA) has biased composition (low complexity). Polar residues predominate over residues 71-105 (TNVSDTKTSSNTNNGETSVAQNPAQQETTQSSSTN). Low complexity-rich tracts occupy residues 106–132 (ATTE…ATTQ) and 143–162 (NQTS…SVNS). Positions 163-200 (PQNSTNAENVSTTQDTSTEATPSNNESAPQSTDASNKD) are enriched in polar residues. Positions 547–565 (QPDEPGEIEPIPEDSDSDP) are enriched in acidic residues. Over residues 566–598 (GSDSGSDSNSDSGSDSGSDSTSDSGSDSASDSD) the composition is skewed to low complexity. Acidic residues predominate over residues 599-861 (SASDSDSASD…DSDSESDSNS (263 aa)). The segment covering 862–880 (DSESGSNNNVVPPNSPKNG) has biased composition (low complexity). The span at 887–896 (NEAKDSKEPL) shows a compositional bias: basic and acidic residues. The short motif at 896–900 (LPDTG) is the LPXTG sorting signal element. Threonine 899 is modified (pentaglycyl murein peptidoglycan amidated threonine). Residues 900 to 933 (GSEDEANTSLIWGLLASIGSLLLFRRKKENKDKK) constitute a propeptide, removed by sortase.

This sequence belongs to the serine-aspartate repeat-containing protein (SDr) family.

It localises to the secreted. Its subcellular location is the cell wall. In terms of biological role, cell surface-associated protein implicated in virulence. Promotes bacterial attachment exclusively to the gamma-chain of human fibrinogen. Induces formation of bacterial clumps. The polypeptide is Clumping factor A (clfA) (Staphylococcus aureus (strain COL)).